We begin with the raw amino-acid sequence, 289 residues long: Melatonin receptor type 1B (289 aa).

Residues 1–2 (GN) lie on the Cytoplasmic side of the membrane. Residues 3 to 23 (AFVVSLALADLVVALYPYPLV) traverse the membrane as a helical segment. Residues 24-41 (LLAIFHNGWTLGEMHCKV) lie on the Extracellular side of the membrane. Cysteines 39 and 116 form a disulfide. The helical transmembrane segment at 42–62 (SGFVMGLSVIGSIFNITAIAI) threads the bilayer. The Cytoplasmic segment spans residues 63–81 (NRYCYICHSFAYDKVYSCW). A helical transmembrane segment spans residues 82–102 (NTMLYVSLIWVLTVIATVPNF). At 103–126 (FVGSLKYDPRIYSCTFVQTASSYY) the chain is on the extracellular side. A helical membrane pass occupies residues 127–147 (TIAVVVIHFIVPITVVSFCYL). The Cytoplasmic portion of the chain corresponds to 148–179 (RIWVLVLQVRRRVKSETKPRLKPSDFRNFLTM). Residues 180-200 (FVVFVIFAFCWAPLNFIGLAV) form a helical membrane-spanning segment. Over 201 to 213 (AINPSEMAPKVPE) the chain is Extracellular. A helical membrane pass occupies residues 214 to 234 (WLFIISYFMAYFNSCLNAIIY). At 235–289 (GLLNQNFRNEYKRILMSLWMPRLFFQDTSKGGTDGQKSKPSPALNNNDQMKTDTL) the chain is on the cytoplasmic side. The interval 264–289 (KGGTDGQKSKPSPALNNNDQMKTDTL) is disordered.

The protein belongs to the G-protein coupled receptor 1 family. In terms of tissue distribution, brain and kidney, with trace levels in lungs.

The protein resides in the cell membrane. High affinity receptor for melatonin. The activity of this receptor is mediated by pertussis toxin sensitive G proteins that inhibits adenylate cyclase activity. The sequence is that of Melatonin receptor type 1B from Gallus gallus (Chicken).